The following is a 381-amino-acid chain: Phosphatidyl-myo-inositol mannosyltransferase (381 aa).

Residues Tyr9 and Gly16 each contribute to the GDP-alpha-D-mannose site. A 1,2-diacyl-sn-glycero-3-phospho-(1D-myo-inositol)-binding positions include Gln18, 69–70 (FN), and Arg75. GDP-alpha-D-mannose-binding positions include Arg204, 209–210 (RK), 251–253 (LDD), Arg256, 274–278 (ESFGI), and Glu282.

The protein belongs to the glycosyltransferase group 1 family. Glycosyltransferase 4 subfamily. As to quaternary structure, monomer. Mg(2+) is required as a cofactor.

Its subcellular location is the cell membrane. The enzyme catalyses a 1,2-diacyl-sn-glycero-3-phospho-(1D-myo-inositol) + GDP-alpha-D-mannose = a 1,2-diacyl-sn-glycero-3-phospho-[alpha-D-mannopyranosyl-(1&lt;-&gt;6)-D-myo-inositol] + GDP + H(+). It functions in the pathway phospholipid metabolism; phosphatidylinositol metabolism. Involved in the biosynthesis of phosphatidyl-myo-inositol mannosides (PIM) which are early precursors in the biosynthesis of lipomannans (LM) and lipoarabinomannans (LAM). Catalyzes the addition of a mannosyl residue from GDP-D-mannose (GDP-Man) to the position 2 of the carrier lipid phosphatidyl-myo-inositol (PI) to generate a phosphatidyl-myo-inositol bearing an alpha-1,2-linked mannose residue (PIM1). The sequence is that of Phosphatidyl-myo-inositol mannosyltransferase from Propionibacterium freudenreichii subsp. shermanii (strain ATCC 9614 / DSM 4902 / CIP 103027 / NCIMB 8099 / CIRM-BIA1).